Consider the following 679-residue polypeptide: Single-strand DNA endonuclease ASTE1 (679 aa).

Positions 351–400 (TILPTQVENMQQPNAHRISQPIRQIIYGLLLNASPHLDKTSWNALPPQPL) are interaction with SHLD2. Positions 625-645 (RSNSKKKRQKKQNTSCSKNRG) are disordered. Residues 626 to 635 (SNSKKKRQKK) are compositionally biased toward basic residues.

It belongs to the asteroid family. As to quaternary structure, interacts with SHLD1, SHLD2, SHLD3, RIF1 and MAD2L2/REV7.

Functionally, structure-specific DNA endonuclease that specifically cleaves single-stranded DNA and 3' overhang DNA. Contributes to the control of DNA double-strand break repair choice by antagonizing BRCA1-dependent homologous recombination (HR) and promoting non-homologous end-joining (NHEJ). Recruited to the single-stranded DNA ends by SHLD2 and cleaves the 3' exposed DNA ends, therefore inhibiting DNA end resection (necessary for HR) and promoting DNA end protection (necessary for NHEJ). The protein is Single-strand DNA endonuclease ASTE1 (ASTE1) of Pongo abelii (Sumatran orangutan).